The following is a 383-amino-acid chain: tRNA(Met) cytidine acetate ligase (383 aa).

ATP is bound by residues 7 to 20 (ITEY…HRYH), Gly-101, Asn-150, and Arg-175.

Belongs to the TmcAL family.

The protein localises to the cytoplasm. The enzyme catalyses cytidine(34) in elongator tRNA(Met) + acetate + ATP = N(4)-acetylcytidine(34) in elongator tRNA(Met) + AMP + diphosphate. Its function is as follows. Catalyzes the formation of N(4)-acetylcytidine (ac(4)C) at the wobble position of elongator tRNA(Met), using acetate and ATP as substrates. First activates an acetate ion to form acetyladenylate (Ac-AMP) and then transfers the acetyl group to tRNA to form ac(4)C34. This is tRNA(Met) cytidine acetate ligase from Lactiplantibacillus plantarum (strain ATCC BAA-793 / NCIMB 8826 / WCFS1) (Lactobacillus plantarum).